The chain runs to 120 residues: uncharacterized protein (120 aa).

Positions 3-120 (IRYKKAFEKI…EKCEICHGSE (118 aa)) constitute an N-acetyltransferase domain.

This is an uncharacterized protein from Bacillus methanolicus.